The sequence spans 545 residues: Monocarboxylate transporter 8 (545 aa).

Residues 1–98 form a disordered region; it reads MALPSPASEE…VETRGTARGF (98 aa). N-acetylalanine is present on Ala2. Topologically, residues 2–102 are cytoplasmic; it reads ALPSPASEEA…GTARGFQPPE (101 aa). 2 tandem repeats follow at residues 29-50 and 51-72. Positions 29 to 72 are 2 X 22 AA approximate tandem repeats; that stretch reads PVPEPEPEPEPEPEPEPEPVPVPPPEPQPEPEPQPLPDPAPLPV. A compositionally biased stretch (acidic residues) spans 33–45; that stretch reads PEPEPEPEPEPEP. Residues 46-70 are compositionally biased toward pro residues; that stretch reads EPVPVPPPEPQPEPEPQPLPDPAPL. Residues 103–123 form a helical membrane-spanning segment; the sequence is GGFGWIVVFAATWCNGSIFGI. The Extracellular segment spans residues 124–149; it reads HNSVGILYSMLLEEEKEKNRQVEFQA. Residues 150 to 170 form a helical membrane-spanning segment; sequence AWVGALAMGMIFFCSPIVSIF. Residues 171-181 are Cytoplasmic-facing; sequence TDRLGCRITAT. Residues 182–202 form a helical membrane-spanning segment; it reads TGAAVAFIGLHTSSFTSSLSL. The Extracellular segment spans residues 203-204; that stretch reads RY. A helical transmembrane segment spans residues 205–225; that stretch reads FTYGILFGCGCSFAFQPSLVI. Residues 226–235 are Cytoplasmic-facing; sequence LGHYFQRRLG. A helical transmembrane segment spans residues 236–256; the sequence is LANGVVSAGSSIFSMSFPFLI. The Extracellular segment spans residues 257–264; it reads KMLGDRIK. A helical transmembrane segment spans residues 265 to 285; that stretch reads LAQTFQVLSTFMFVLTLLSLT. Residues 286 to 328 are Cytoplasmic-facing; the sequence is YRPLLPSSQDTPSKRGAHTLRQRFLVQFRKYFNMRVFRQRTYR. A helical membrane pass occupies residues 329–349; sequence IWAFGIAAAALGYFVPYVHLM. Residues 350 to 362 lie on the Extracellular side of the membrane; it reads KYVEDKFKEIKET. The helical transmembrane segment at 363–383 threads the bilayer; sequence WVLLVCIGATSGLGRLVSGHI. Topologically, residues 384-392 are cytoplasmic; that stretch reads SDSIPGLKK. Residues 393-413 form a helical membrane-spanning segment; sequence IYLQVLSFLLLGLMSMMIPLC. Topologically, residues 414 to 415 are extracellular; that stretch reads RD. Residues 416 to 436 form a helical membrane-spanning segment; the sequence is FGGLIVVCLFLGLCDGFFITI. Over 437–453 the chain is Cytoplasmic; it reads MAPIAFELVGPMQASQA. A helical transmembrane segment spans residues 454 to 474; the sequence is IGYLLGMMALPMIAGPPIAGL. Over 475-483 the chain is Extracellular; it reads LRNCFGNYH. A helical transmembrane segment spans residues 484–504; that stretch reads VAFYFAGVPPIIGAVILFFVP. Over 505–545 the chain is Cytoplasmic; it reads LMHQRMFKKEQRESSKDKMLSHDPDPNGELLPGSPTPEEPI. Residues 514–529 show a composition bias toward basic and acidic residues; that stretch reads EQRESSKDKMLSHDPD. A disordered region spans residues 514–545; the sequence is EQRESSKDKMLSHDPDPNGELLPGSPTPEEPI. Phosphothreonine is present on Thr540.

This sequence belongs to the major facilitator superfamily. Monocarboxylate porter (TC 2.A.1.13) family. In terms of assembly, monomer. Homodimer. Homooligomer. Expressed at highest levels in liver, lower levels in brain, kidney and heart (at protein level). Expressed in microvessels of the blood-brain barrier (BBB) (at protein level).

The protein resides in the cell membrane. Its subcellular location is the apical cell membrane. It carries out the reaction 3,3',5-triiodo-L-thyronine(out) = 3,3',5-triiodo-L-thyronine(in). It catalyses the reaction 3,3',5'-triiodo-L-thyronine(out) = 3,3',5'-triiodo-L-thyronine(in). The catalysed reaction is L-thyroxine(out) = L-thyroxine(in). The enzyme catalyses 3,3'-diiodo-L-thyronine(out) = 3,3'-diiodo-L-thyronine(in). In terms of biological role, specific thyroid hormone transmembrane transporter, that mediates both uptake and efflux of thyroid hormone across the cell membrane independently of pH or a Na(+) gradient. Major substrates are the iodothyronines T3 and T4 and to a lesser extent rT3 and 3,3-diiodothyronine (3,3'-T2). Acts as an important mediator of thyroid hormone transport, especially T3, through the blood-brain barrier. In Rattus norvegicus (Rat), this protein is Monocarboxylate transporter 8 (SLC16A2).